Consider the following 398-residue polypeptide: Phosphoglycerate kinase (398 aa).

Substrate is bound by residues 23-25 (DFN), Arg-38, 61-64 (HMGK), Arg-122, and Arg-155. ATP-binding positions include Lys-206, Gly-297, Glu-328, and 354–357 (GGDS).

It belongs to the phosphoglycerate kinase family. In terms of assembly, monomer.

The protein resides in the cytoplasm. The catalysed reaction is (2R)-3-phosphoglycerate + ATP = (2R)-3-phospho-glyceroyl phosphate + ADP. It participates in carbohydrate degradation; glycolysis; pyruvate from D-glyceraldehyde 3-phosphate: step 2/5. The protein is Phosphoglycerate kinase of Clostridium botulinum (strain 657 / Type Ba4).